The chain runs to 220 residues: Adenylate kinase (220 aa).

10-15 is an ATP binding site; it reads GAGKGT. Positions 30 to 59 are NMP; that stretch reads STGDMLRAAVKAGTPLGVEAKGYMDAGKLV. AMP contacts are provided by residues threonine 31, arginine 36, 57–59, 85–88, and glutamine 92; these read KLV and GFPR. Residues 122-159 are LID; the sequence is GRRTHPASGRTYHVKFNPPKVEGHDDVTGEPLIQRDDD. ATP is bound by residues arginine 123 and 132–133; that span reads TY. AMP-binding residues include arginine 156 and arginine 167. Glycine 206 contacts ATP.

This sequence belongs to the adenylate kinase family. In terms of assembly, monomer.

The protein resides in the cytoplasm. It catalyses the reaction AMP + ATP = 2 ADP. Its pathway is purine metabolism; AMP biosynthesis via salvage pathway; AMP from ADP: step 1/1. In terms of biological role, catalyzes the reversible transfer of the terminal phosphate group between ATP and AMP. Plays an important role in cellular energy homeostasis and in adenine nucleotide metabolism. The chain is Adenylate kinase from Burkholderia cenocepacia (strain HI2424).